The chain runs to 165 residues: Mating factor alpha-1 (165 aa).

Residues 1–19 (MRFPSIFTAVLFAASSALA) constitute a signal peptide (or 20). 4 propeptides span residues 20-89 (APVN…EAEA), 105-110 (EAEAEA), 126-131 (EADAEA), and 147-152 (EADAEA).

Functionally, the active factor is excreted into the culture medium by haploid cells of the alpha mating type and acts on cells of the opposite mating type (type A). It mediates the conjugation process between the two types by inhibiting the initiation of DNA synthesis in type a cells and synchronizing them with type alpha. In Saccharomyces cerevisiae (strain ATCC 204508 / S288c) (Baker's yeast), this protein is Mating factor alpha-1 (MF(ALPHA)1).